We begin with the raw amino-acid sequence, 581 residues long: Multidrug and toxin extrusion protein 2 (581 aa).

The Cytoplasmic segment spans residues 1 to 33 (MDSLQDTVPLDHGGCCPALSRLVPRGFGTEMWT). The helical transmembrane segment at 34–54 (LFALSGPLFLFQVLTFMIYIV) threads the bilayer. The Extracellular segment spans residues 55–66 (STVFCGHLGKVE). Residues 67 to 87 (LASVTLAVAFVNVCGVSVGVG) traverse the membrane as a helical segment. Residues 88–119 (LSSACDTLMSQSFGSPNKKHVGVILQRGALVL) lie on the Cytoplasmic side of the membrane. Residues 120–140 (LLCCLPCWALFLNTQHILLLF) traverse the membrane as a helical segment. The Extracellular segment spans residues 141–153 (RQDPEVSRLTQDY). A helical transmembrane segment spans residues 154-174 (VMIFIPGLPVIFLYNLLAKYL). Residues 175-183 (QNQKITWPQ) are Cytoplasmic-facing. The chain crosses the membrane as a helical span at residues 184 to 204 (VLSGVVGNCVNGVANYALVSV). Residues 205–212 (LNLGVRGS) are Extracellular-facing. A helical membrane pass occupies residues 213 to 233 (AYANIISQFAQTVFLLLYIVL). The Cytoplasmic segment spans residues 234-253 (KKLHLETWAGWSSQCLQDWG). A helical membrane pass occupies residues 254–273 (PFFSLAVPSMLMICVEWWAY). The Extracellular portion of the chain corresponds to 274-317 (EIGSFLMGLLSVVDLSAQAVIYEVATVTYMRHSHHLAYTAHVAR). A helical transmembrane segment spans residues 318 to 338 (IPLGLSIGVCVRVGMALGAAD). The Cytoplasmic segment spans residues 339–346 (TVQAKRSA). A helical membrane pass occupies residues 347–367 (VSGVLSIVGISLVLGTLISIL). The Extracellular segment spans residues 368-380 (KNQLGHIFTNDED). Residues 381–401 (VIALVSQVLPVYSVFHVFEAI) form a helical membrane-spanning segment. The Cytoplasmic portion of the chain corresponds to 402 to 420 (CCVYGGVLRGTGKQAFGAA). The chain crosses the membrane as a helical span at residues 421–441 (VNAITYYIIGLPLGILLTFVV). Over 442–444 (RMR) the chain is Extracellular. A helical transmembrane segment spans residues 445–465 (IMGLWLGMLACVFLATAAFVA). Over 466–557 (YTARLDWKLA…LSVKQLVIRR (92 aa)) the chain is Cytoplasmic. The tract at residues 481–513 (KHSGQQQQQQRAESTATRSGPEKAVLSSVATGS) is disordered. The helical transmembrane segment at 558-578 (GAALGAASATLMVGLTVRILA) threads the bilayer. Over 579 to 581 (TRH) the chain is Extracellular.

This sequence belongs to the multi antimicrobial extrusion (MATE) (TC 2.A.66.1) family.

Its subcellular location is the cell membrane. The protein localises to the apical cell membrane. The enzyme catalyses thiamine(out) + H(+)(in) = thiamine(in) + H(+)(out). The catalysed reaction is estrone 3-sulfate(in) + H(+)(out) = estrone 3-sulfate(out) + H(+)(in). It carries out the reaction creatinine(in) + H(+)(out) = creatinine(out) + H(+)(in). In terms of biological role, multidrug efflux pump that functions as a H(+)/organic cation antiporter. Mediates the efflux of cationic compounds, such as the model cations, tetraethylammonium (TEA) and 1-methyl-4-phenylpyridinium (MPP+), the platinum-based drug oxaliplatin or weak bases that are positively charged at physiological pH, cimetidine or the antidiabetic drug metformin. Mediates the efflux of the endogenous compounds creatinine, thiamine and estrone-3-sulfate. Plays a physiological role in the excretion of drugs, toxins and endogenous metabolites through the kidney. This chain is Multidrug and toxin extrusion protein 2 (SLC47A2), found in Pongo abelii (Sumatran orangutan).